Reading from the N-terminus, the 754-residue chain is Phosphoinositide 3-kinase regulatory subunit 6 (754 aa).

Positions 343 to 363 are disordered; sequence ERDLPTGADELPAPGSPEMER.

In terms of assembly, heterodimer of a catalytic subunit (PIK3CG) and a regulatory (PIK3R6) subunit. The binding of PIK3R6 to PIK3CG may exclude the binding of PIK3R5 to PIK3CG. Interacts with beta-gamma G protein dimers. Interacts with PDE3B and RAPGEF3; form a signaling complex that regulates phosphatidylinositol 3-kinase gamma in angiogenesis.

It is found in the cytoplasm. The protein localises to the cell membrane. In terms of biological role, regulatory subunit of the PI3K gamma complex. Acts as an adapter to drive activation of PIK3CG by beta-gamma G protein dimers. The PIK3CG:PIK3R6 heterodimer is much less sensitive to beta-gamma G protein dimers than PIK3CG:PIK3R5 and its membrane recruitment and beta-gamma G protein dimer-dependent activation requires HRAS bound to PIK3CG. Recruits of the PI3K gamma complex to a PDE3B:RAPGEF3 signaling complex involved in angiogenesis; signaling seems to involve RRAS. The polypeptide is Phosphoinositide 3-kinase regulatory subunit 6 (PIK3R6) (Homo sapiens (Human)).